The primary structure comprises 119 residues: Large ribosomal subunit protein bL19 (119 aa).

This sequence belongs to the bacterial ribosomal protein bL19 family.

This protein is located at the 30S-50S ribosomal subunit interface and may play a role in the structure and function of the aminoacyl-tRNA binding site. The protein is Large ribosomal subunit protein bL19 of Petrotoga mobilis (strain DSM 10674 / SJ95).